The chain runs to 400 residues: Phosphoglycerate kinase (400 aa).

Substrate is bound by residues 22 to 24 (DFN), Arg-38, 61 to 64 (HLGR), Arg-119, and Arg-152. Residues Lys-205, Gly-296, Glu-327, and 353-356 (GGDT) contribute to the ATP site.

This sequence belongs to the phosphoglycerate kinase family. In terms of assembly, monomer.

The protein resides in the cytoplasm. It catalyses the reaction (2R)-3-phosphoglycerate + ATP = (2R)-3-phospho-glyceroyl phosphate + ADP. Its pathway is carbohydrate degradation; glycolysis; pyruvate from D-glyceraldehyde 3-phosphate: step 2/5. The sequence is that of Phosphoglycerate kinase from Campylobacter jejuni subsp. doylei (strain ATCC BAA-1458 / RM4099 / 269.97).